Here is a 621-residue protein sequence, read N- to C-terminus: UvrABC system protein C (621 aa).

Residues 11 to 90 (TTPGVYLYKD…IKKHRPRYNI (80 aa)) form the GIY-YIG domain. The UVR domain occupies 200–235 (KELVELLQKDMLYASEALEFEKAATLRDQIQAIKHT).

This sequence belongs to the UvrC family. Interacts with UvrB in an incision complex.

The protein resides in the cytoplasm. In terms of biological role, the UvrABC repair system catalyzes the recognition and processing of DNA lesions. UvrC both incises the 5' and 3' sides of the lesion. The N-terminal half is responsible for the 3' incision and the C-terminal half is responsible for the 5' incision. This Lawsonia intracellularis (strain PHE/MN1-00) protein is UvrABC system protein C.